Reading from the N-terminus, the 356-residue chain is D-alanine--D-alanine ligase (356 aa).

The region spanning 134–339 (KQLFATRGLP…YSELITDLIN (206 aa)) is the ATP-grasp domain. 167-222 (EGKLTYPVFVKPANLGSSVGISKCTDSETLIHGIEEALQFDRKLVIEQGVNAREVE) contributes to the ATP binding site. The Mg(2+) site is built by aspartate 293, glutamate 306, and asparagine 308.

The protein belongs to the D-alanine--D-alanine ligase family. The cofactor is Mg(2+). Mn(2+) is required as a cofactor.

The protein localises to the cytoplasm. The catalysed reaction is 2 D-alanine + ATP = D-alanyl-D-alanine + ADP + phosphate + H(+). The protein operates within cell wall biogenesis; peptidoglycan biosynthesis. Its function is as follows. Cell wall formation. The protein is D-alanine--D-alanine ligase of Macrococcus caseolyticus (strain JCSC5402) (Macrococcoides caseolyticum).